Reading from the N-terminus, the 839-residue chain is Septin-interacting protein 1 (839 aa).

The tract at residues 22 to 164 is disordered; that stretch reads INRPRGRQSR…ASERNVGAWE (143 aa). Residues Ser43 and Ser47 each carry the phosphoserine modification. Thr53 carries the post-translational modification Phosphothreonine. Basic and acidic residues predominate over residues 88 to 101; that stretch reads LQADDEKGSQKEGA. Over residues 102–111 the composition is skewed to acidic residues; it reads EADQGEESDD. The span at 140 to 149 shows a compositional bias: polar residues; that stretch reads SRKQPSTTFQ. A G-patch domain is found at 167-213; sequence TRGIGAKLLLQMGYEPGKGLGKDLQGISHPVQAHVRKGRGAIGAYGP. Residues 363 to 411 adopt a coiled-coil conformation; the sequence is IDNQERECSSQQAALESEHRKLEEIVQLERNHIRTLEESLERVERLIDN.

The protein belongs to the TFP11/STIP family. As to quaternary structure, identified in the spliceosome C complex. Interacts with pnut.

The protein localises to the nucleus. Functionally, may be involved in pre-mRNA splicing. This Drosophila melanogaster (Fruit fly) protein is Septin-interacting protein 1 (sip1).